We begin with the raw amino-acid sequence, 160 residues long: Ribosomal RNA large subunit methyltransferase H (160 aa).

S-adenosyl-L-methionine-binding positions include Leu76, Gly108, and 127 to 132 (LGKMTW).

Belongs to the RNA methyltransferase RlmH family. In terms of assembly, homodimer.

It is found in the cytoplasm. The catalysed reaction is pseudouridine(1915) in 23S rRNA + S-adenosyl-L-methionine = N(3)-methylpseudouridine(1915) in 23S rRNA + S-adenosyl-L-homocysteine + H(+). Its function is as follows. Specifically methylates the pseudouridine at position 1915 (m3Psi1915) in 23S rRNA. The sequence is that of Ribosomal RNA large subunit methyltransferase H from Rhizobium meliloti (strain 1021) (Ensifer meliloti).